Reading from the N-terminus, the 657-residue chain is Serine/threonine-protein kinase BUR1 (657 aa).

A Protein kinase domain is found at 60-366 (YREDEKLGQG…AMSAKHHPWF (307 aa)). ATP is bound by residues 66–74 (LGQGTFGEV) and lysine 89. Aspartate 195 serves as the catalytic Proton acceptor. Residue threonine 240 is modified to Phosphothreonine; by CAK. Position 400 is a phosphoserine (serine 400). Threonine 405 carries the phosphothreonine modification. Positions 414–657 (KGESPVVKNL…FQNSDIADLY (244 aa)) are disordered. Phosphoserine is present on serine 417. Low complexity predominate over residues 489–501 (NNSSRNNRFSGNS). Composition is skewed to polar residues over residues 535-552 (SRYQ…SPND), 564-595 (PETN…NGSR), and 614-625 (ISPSQGQHQLTS). Residues 627 to 649 (PIEKKNGSFKDERAKPDESKEFQ) are compositionally biased toward basic and acidic residues. A Phosphoserine modification is found at serine 634.

The protein belongs to the protein kinase superfamily. CMGC Ser/Thr protein kinase family. CDC2/CDKX subfamily. As to quaternary structure, belongs to the BUR kinase complex composed of SGV1/BUR1 and BUR2. Interacts with BUR2 and RBP1.

The protein localises to the nucleus. The catalysed reaction is L-seryl-[protein] + ATP = O-phospho-L-seryl-[protein] + ADP + H(+). It carries out the reaction L-threonyl-[protein] + ATP = O-phospho-L-threonyl-[protein] + ADP + H(+). The enzyme catalyses [DNA-directed RNA polymerase] + ATP = phospho-[DNA-directed RNA polymerase] + ADP + H(+). Functionally, serine/threonine-protein kinase component of the BUR kinase complex involved in transcription regulation. This complex phosphorylates 'Ser-120' of the UBC2/RAD6 ubiquitin-conjugating enzyme (E2), leading to monoubiquitination of histone H2B, the localization of the PAF1 complex to the chromatin, and the silencing of telomeric-associated genes. Also required for histone H3 'Lys-4' trimethylation. May phosphorylate the 'Ser-5' of the RBP1 carboxy-terminal domain (CTD) repeats. Necessary for the recovery from pheromone-induced growth arrest in the cell cycle G1 phase. The kinase activity of the complex requires the presence of BUR2. The chain is Serine/threonine-protein kinase BUR1 (SGV1) from Saccharomyces cerevisiae (strain ATCC 204508 / S288c) (Baker's yeast).